The following is a 98-amino-acid chain: NADH-ubiquinone oxidoreductase chain 4L (98 aa).

A run of 3 helical transmembrane segments spans residues 2–22 (SPIY…TLLF), 26–46 (LMST…MVTS), and 61–81 (ITML…LVMI).

This sequence belongs to the complex I subunit 4L family. Core subunit of respiratory chain NADH dehydrogenase (Complex I) which is composed of 45 different subunits.

It localises to the mitochondrion inner membrane. It catalyses the reaction a ubiquinone + NADH + 5 H(+)(in) = a ubiquinol + NAD(+) + 4 H(+)(out). Its function is as follows. Core subunit of the mitochondrial membrane respiratory chain NADH dehydrogenase (Complex I) which catalyzes electron transfer from NADH through the respiratory chain, using ubiquinone as an electron acceptor. Part of the enzyme membrane arm which is embedded in the lipid bilayer and involved in proton translocation. The sequence is that of NADH-ubiquinone oxidoreductase chain 4L (MT-ND4L) from Nephelomys albigularis (Tomes's rice rat).